A 221-amino-acid polypeptide reads, in one-letter code: 7-cyano-7-deazaguanine synthase (221 aa).

ATP is bound at residue 10–20 (FSGGQDSTTCL). The Zn(2+) site is built by C187, C196, C199, and C202.

The protein belongs to the QueC family. Homodimer. It depends on Zn(2+) as a cofactor.

The catalysed reaction is 7-carboxy-7-deazaguanine + NH4(+) + ATP = 7-cyano-7-deazaguanine + ADP + phosphate + H2O + H(+). Its pathway is purine metabolism; 7-cyano-7-deazaguanine biosynthesis. Catalyzes the ATP-dependent conversion of 7-carboxy-7-deazaguanine (CDG) to 7-cyano-7-deazaguanine (preQ(0)). The sequence is that of 7-cyano-7-deazaguanine synthase from Shouchella clausii (strain KSM-K16) (Alkalihalobacillus clausii).